The primary structure comprises 648 residues: Probable potassium transport system protein Kup 1 (648 aa).

Residues methionine 1–histidine 31 are disordered. Residues glycine 10 to glutamine 26 are compositionally biased toward low complexity. 12 helical membrane-spanning segments follow: residues leucine 39–leucine 59, leucine 73–phenylalanine 93, isoleucine 130–alanine 150, proline 165–isoleucine 185, valine 193–alanine 213, phenylalanine 243–methionine 263, tryptophan 275–isoleucine 295, leucine 317–phenylalanine 337, isoleucine 364–phenylalanine 384, tyrosine 394–phenylalanine 414, alanine 421–alanine 441, and isoleucine 446–threonine 466.

This sequence belongs to the HAK/KUP transporter (TC 2.A.72) family.

It localises to the cell inner membrane. The enzyme catalyses K(+)(in) + H(+)(in) = K(+)(out) + H(+)(out). Its function is as follows. Transport of potassium into the cell. Likely operates as a K(+):H(+) symporter. The polypeptide is Probable potassium transport system protein Kup 1 (Novosphingobium aromaticivorans (strain ATCC 700278 / DSM 12444 / CCUG 56034 / CIP 105152 / NBRC 16084 / F199)).